Here is a 330-residue protein sequence, read N- to C-terminus: DNA-directed RNA polymerase subunit alpha (330 aa).

The tract at residues 1–232 is alpha N-terminal domain (alpha-NTD); the sequence is MAILAFQKPD…YHFMLFSDEK (232 aa). Residues 248-330 are alpha C-terminal domain (alpha-CTD); that stretch reads EEVLHMRQLL…DISKYKLDKE (83 aa).

The protein belongs to the RNA polymerase alpha chain family. As to quaternary structure, homodimer. The RNAP catalytic core consists of 2 alpha, 1 beta, 1 beta' and 1 omega subunit. When a sigma factor is associated with the core the holoenzyme is formed, which can initiate transcription.

It catalyses the reaction RNA(n) + a ribonucleoside 5'-triphosphate = RNA(n+1) + diphosphate. Functionally, DNA-dependent RNA polymerase catalyzes the transcription of DNA into RNA using the four ribonucleoside triphosphates as substrates. The chain is DNA-directed RNA polymerase subunit alpha from Bacteroides fragilis (strain ATCC 25285 / DSM 2151 / CCUG 4856 / JCM 11019 / LMG 10263 / NCTC 9343 / Onslow / VPI 2553 / EN-2).